A 275-amino-acid chain; its full sequence is Anamorsin homolog (275 aa).

The interval 1–147 is N-terminal SAM-like domain; it reads MTSASIHIGS…QSASSAAATG (147 aa). A linker region spans residues 148-183; that stretch reads RINLGGAKTKVKLSLDDDDDDQLIDEDDLLNGGGGM. [2Fe-2S] cluster-binding residues include cysteine 203, cysteine 209, cysteine 212, and cysteine 214. Residues 203 to 214 are fe-S binding site A; the sequence is CGGRKACDNCTC. [4Fe-4S] cluster-binding residues include cysteine 238, cysteine 241, cysteine 249, and cysteine 252. Short sequence motifs (cx2C motif) lie at residues 238-241 and 249-252; these read CGNC and CAGC. Residues 238 to 252 are fe-S binding site B; that stretch reads CGNCAKGDAFRCAGC.

Belongs to the anamorsin family. As to quaternary structure, monomer. [2Fe-2S] cluster is required as a cofactor. It depends on [4Fe-4S] cluster as a cofactor.

Its subcellular location is the cytoplasm. The protein localises to the mitochondrion intermembrane space. Its function is as follows. Component of the cytosolic iron-sulfur (Fe-S) protein assembly (CIA) machinery. Required for the maturation of extramitochondrial Fe-S proteins. Part of an electron transfer chain functioning in an early step of cytosolic Fe-S biogenesis, facilitating the de novo assembly of a [4Fe-4S] cluster on the cytosolic Fe-S scaffold complex. Electrons are transferred from NADPH via a FAD- and FMN-containing diflavin oxidoreductase. Together with the diflavin oxidoreductase, also required for the assembly of the diferric tyrosyl radical cofactor of ribonucleotide reductase (RNR), probably by providing electrons for reduction during radical cofactor maturation in the catalytic small subunit. This Thalassiosira pseudonana (Marine diatom) protein is Anamorsin homolog.